The primary structure comprises 237 residues: Protein GrpE (237 aa).

2 disordered regions span residues 27-51 (EDRE…LSET) and 202-237 (AVSS…PQHS). 2 stretches are compositionally biased toward low complexity: residues 33 to 45 (ASTS…AEAS) and 204 to 213 (SSGSPTSEPS). A compositionally biased stretch (polar residues) spans 227-237 (TPASPQNPQHS).

This sequence belongs to the GrpE family. In terms of assembly, homodimer.

Its subcellular location is the cytoplasm. Functionally, participates actively in the response to hyperosmotic and heat shock by preventing the aggregation of stress-denatured proteins, in association with DnaK and GrpE. It is the nucleotide exchange factor for DnaK and may function as a thermosensor. Unfolded proteins bind initially to DnaJ; upon interaction with the DnaJ-bound protein, DnaK hydrolyzes its bound ATP, resulting in the formation of a stable complex. GrpE releases ADP from DnaK; ATP binding to DnaK triggers the release of the substrate protein, thus completing the reaction cycle. Several rounds of ATP-dependent interactions between DnaJ, DnaK and GrpE are required for fully efficient folding. This Synechococcus sp. (strain JA-3-3Ab) (Cyanobacteria bacterium Yellowstone A-Prime) protein is Protein GrpE.